A 337-amino-acid chain; its full sequence is Movement protein (337 aa).

Residues 1–11 (MAGLWRSNSTL) show a composition bias toward polar residues. Disordered regions lie at residues 1 to 24 (MAGLWRSNSTLDVERGRNRTQTET) and 273 to 337 (SVVR…VRQT).

The protein resides in the host cell junction. Its subcellular location is the host plasmodesma. In terms of biological role, transports viral genome to neighboring plant cells directly through plasmosdesmata, without any budding. The movement protein allows efficient cell to cell propagation, by bypassing the host cell wall barrier. Acts by forming a tubular structure at the host plasmodesmata, enlarging it enough to allow free passage of virion capsids. The protein is Movement protein of Olive latent virus 2 (isolate Italy) (OLV-2).